The primary structure comprises 324 residues: Serine racemase (324 aa).

ATP is bound by residues Ser32, Lys51, and Thr52. Lys56 serves as the catalytic Proton acceptor. N6-(pyridoxal phosphate)lysine is present on Lys56. Thr78 serves as a coordination point for Ca(2+). Ser81 serves as the catalytic Proton acceptor. Residue Asn83 coordinates pyridoxal 5'-phosphate. Residues Gln86 and Tyr118 each contribute to the ATP site. Position 175 (Asp175) interacts with Mg(2+). 4 residues coordinate pyridoxal 5'-phosphate: Gly182, Gly183, Gly184, and Gly185. Ca(2+) contacts are provided by Glu207, Ala211, and Asp213. Mg(2+) is bound by residues Glu207, Ala211, and Asp213. Glu207, Ala211, and Asp213 together coordinate Mn(2+). Residue Lys277 participates in ATP binding. Ser310 serves as a coordination point for pyridoxal 5'-phosphate. Residue Asn313 participates in ATP binding.

It belongs to the serine/threonine dehydratase family. Homodimer. Mg(2+) serves as cofactor. Mn(2+) is required as a cofactor. The cofactor is Ca(2+). Requires pyridoxal 5'-phosphate as cofactor.

It catalyses the reaction L-serine = D-serine. The enzyme catalyses L-serine = pyruvate + NH4(+). It carries out the reaction D-serine = pyruvate + NH4(+). Functionally, catalyzes the synthesis of D-serine from L-serine. Has dehydratase activity towards both L-serine and D-serine. This Dictyostelium discoideum (Social amoeba) protein is Serine racemase (srr).